The sequence spans 443 residues: Eukaryotic translation initiation factor 3 subunit E (443 aa).

One can recognise a PCI domain in the interval 249–417 (LDLFFNAGFI…GTVVMNHPPS (169 aa)).

It belongs to the eIF-3 subunit E family. As to quaternary structure, component of the eukaryotic translation initiation factor 3 (eIF-3) complex.

The protein localises to the cytoplasm. Its function is as follows. Component of the eukaryotic translation initiation factor 3 (eIF-3) complex, which is involved in protein synthesis of a specialized repertoire of mRNAs and, together with other initiation factors, stimulates binding of mRNA and methionyl-tRNAi to the 40S ribosome. The eIF-3 complex specifically targets and initiates translation of a subset of mRNAs involved in cell proliferation. This is Eukaryotic translation initiation factor 3 subunit E (int-6) from Neurospora crassa (strain ATCC 24698 / 74-OR23-1A / CBS 708.71 / DSM 1257 / FGSC 987).